The primary structure comprises 1368 residues: DNA-directed RNA polymerase subunit beta (1368 aa).

The protein belongs to the RNA polymerase beta chain family. As to quaternary structure, the RNAP catalytic core consists of 2 alpha, 1 beta, 1 beta' and 1 omega subunit. When a sigma factor is associated with the core the holoenzyme is formed, which can initiate transcription.

It carries out the reaction RNA(n) + a ribonucleoside 5'-triphosphate = RNA(n+1) + diphosphate. In terms of biological role, DNA-dependent RNA polymerase catalyzes the transcription of DNA into RNA using the four ribonucleoside triphosphates as substrates. This Burkholderia cenocepacia (strain ATCC BAA-245 / DSM 16553 / LMG 16656 / NCTC 13227 / J2315 / CF5610) (Burkholderia cepacia (strain J2315)) protein is DNA-directed RNA polymerase subunit beta.